We begin with the raw amino-acid sequence, 858 residues long: DNA mismatch repair protein MutS (858 aa).

An ATP-binding site is contributed by 613 to 620 (GPNMAGKS).

It belongs to the DNA mismatch repair MutS family.

Functionally, this protein is involved in the repair of mismatches in DNA. It is possible that it carries out the mismatch recognition step. This protein has a weak ATPase activity. This chain is DNA mismatch repair protein MutS, found in Dehalococcoides mccartyi (strain ATCC BAA-2266 / KCTC 15142 / 195) (Dehalococcoides ethenogenes (strain 195)).